Reading from the N-terminus, the 253-residue chain is Imidazole glycerol phosphate synthase subunit HisF (253 aa).

Active-site residues include aspartate 11 and aspartate 130.

This sequence belongs to the HisA/HisF family. Heterodimer of HisH and HisF.

The protein localises to the cytoplasm. It catalyses the reaction 5-[(5-phospho-1-deoxy-D-ribulos-1-ylimino)methylamino]-1-(5-phospho-beta-D-ribosyl)imidazole-4-carboxamide + L-glutamine = D-erythro-1-(imidazol-4-yl)glycerol 3-phosphate + 5-amino-1-(5-phospho-beta-D-ribosyl)imidazole-4-carboxamide + L-glutamate + H(+). Its pathway is amino-acid biosynthesis; L-histidine biosynthesis; L-histidine from 5-phospho-alpha-D-ribose 1-diphosphate: step 5/9. Functionally, IGPS catalyzes the conversion of PRFAR and glutamine to IGP, AICAR and glutamate. The HisF subunit catalyzes the cyclization activity that produces IGP and AICAR from PRFAR using the ammonia provided by the HisH subunit. This chain is Imidazole glycerol phosphate synthase subunit HisF, found in Ruegeria pomeroyi (strain ATCC 700808 / DSM 15171 / DSS-3) (Silicibacter pomeroyi).